A 69-amino-acid chain; its full sequence is Disintegrin EC6 subunit beta (69 aa).

Residues 1–65 enclose the Disintegrin domain; that stretch reads NSVHPCCDPV…DCPPNPWNGK (65 aa). 4 disulfide bridges follow: Cys6/Cys29, Cys20/Cys26, Cys25/Cys50, and Cys38/Cys57. Positions 42-44 match the Cell attachment site motif; that stretch reads RGD.

This sequence belongs to the venom metalloproteinase (M12B) family. P-II subfamily. P-IIe sub-subfamily. In terms of assembly, heterodimer with subunit alpha; disulfide-linked. Expressed by the venom gland.

It localises to the secreted. Functionally, potently inhibits adhesion of alpha-4/beta-1 (ITGA4/ITGB1) and alpha-9/beta-1 (ITGA9/ITGB1) integrins to VCAM1, and adhesion of alpha-5/beta-1 (ITGA5/ITGB1) integrin to fibronectin. Has a much less effect on alpha-IIb/beta-3 (ITGA2B/ITGB3) integrin. Also potently inhibits neutrophil migration across TNF-alpha-activated human umbilical endothelial cells. The protein is Disintegrin EC6 subunit beta of Echis carinatus sochureki (Saw-scaled viper).